The chain runs to 130 residues: Small ribosomal subunit protein uS8 (130 aa).

This sequence belongs to the universal ribosomal protein uS8 family. As to quaternary structure, part of the 30S ribosomal subunit. Contacts proteins S5 and S12.

In terms of biological role, one of the primary rRNA binding proteins, it binds directly to 16S rRNA central domain where it helps coordinate assembly of the platform of the 30S subunit. The polypeptide is Small ribosomal subunit protein uS8 (Onion yellows phytoplasma (strain OY-M)).